Here is a 56-residue protein sequence, read N- to C-terminus: Small ribosomal subunit protein uS14 (56 aa).

Residues Cys-21, Cys-24, Cys-39, and Cys-42 each contribute to the Zn(2+) site.

Belongs to the universal ribosomal protein uS14 family. Zn(2+) is required as a cofactor.

In Griffithsia japonica (Red alga), this protein is Small ribosomal subunit protein uS14 (RPS29).